We begin with the raw amino-acid sequence, 207 residues long: Guanylate kinase (207 aa).

The 181-residue stretch at 4-184 folds into the Guanylate kinase-like domain; sequence GTLYIVSAPS…ALSDLKTIIR (181 aa). ATP is bound at residue 11–18; sequence APSGAGKS.

This sequence belongs to the guanylate kinase family.

The protein localises to the cytoplasm. The enzyme catalyses GMP + ATP = GDP + ADP. It catalyses the reaction dZMP + ATP = dZDP + ADP. Its pathway is purine metabolism. In terms of biological role, essential for recycling GMP and indirectly, cGMP. Functionally, (Microbial infection) Catalyzes the phosphorylation of dZMP to dZDP, when the bacterium is infected by a phage that produces the substrate for the synthesis of dZTP (2- amino-2'-deoxyadenosine 5'-triphosphate), which is then used by the phage as a DNA polymerase substrate. This Salmonella choleraesuis (strain SC-B67) protein is Guanylate kinase.